Reading from the N-terminus, the 261-residue chain is tRNA pseudouridine synthase A (261 aa).

The active-site Nucleophile is aspartate 51. Residue tyrosine 109 participates in substrate binding.

This sequence belongs to the tRNA pseudouridine synthase TruA family. As to quaternary structure, homodimer.

It catalyses the reaction uridine(38/39/40) in tRNA = pseudouridine(38/39/40) in tRNA. In terms of biological role, formation of pseudouridine at positions 38, 39 and 40 in the anticodon stem and loop of transfer RNAs. The polypeptide is tRNA pseudouridine synthase A (Shewanella baltica (strain OS185)).